A 1161-amino-acid polypeptide reads, in one-letter code: DNA-directed RNA polymerase subunit beta' (1161 aa).

Cys60, Cys62, Cys75, and Cys78 together coordinate Zn(2+). Mg(2+) is bound by residues Asp449, Asp451, and Asp453. Zn(2+) is bound by residues Cys790, Cys864, Cys871, and Cys874.

The protein belongs to the RNA polymerase beta' chain family. In terms of assembly, the RNAP catalytic core consists of 2 alpha, 1 beta, 1 beta' and 1 omega subunit. When a sigma factor is associated with the core the holoenzyme is formed, which can initiate transcription. Mg(2+) serves as cofactor. Zn(2+) is required as a cofactor.

The catalysed reaction is RNA(n) + a ribonucleoside 5'-triphosphate = RNA(n+1) + diphosphate. Functionally, DNA-dependent RNA polymerase catalyzes the transcription of DNA into RNA using the four ribonucleoside triphosphates as substrates. This chain is DNA-directed RNA polymerase subunit beta', found in Clostridioides difficile (strain 630) (Peptoclostridium difficile).